The sequence spans 350 residues: Purine-rich element-binding protein gamma (350 aa).

2 disordered regions span residues 1–59 and 136–172; these read MERA…GTSE and GHRQ…HPHS. The segment covering 9-27 has biased composition (gly residues); the sequence is GGGSGGGRGRGGKNVGGPG. Polar residues predominate over residues 47–59; it reads ASATPNQSGGTSE. Residues 54–296 mediate DNA binding; that stretch reads SGGTSEIQEL…GIFLKVSEVR (243 aa). The span at 137–149 shows a compositional bias: basic and acidic residues; that stretch reads HRQEHGQSKEQVS. 3 positions are modified to phosphoserine: Ser-163, Ser-166, and Ser-342.

The protein belongs to the PUR DNA-binding protein family. Isoform 1 is expressed in testis. Isoform 2 is expressed in blastocyst and kidney.

Its subcellular location is the nucleus. The protein is Purine-rich element-binding protein gamma (Purg) of Mus musculus (Mouse).